The chain runs to 320 residues: Probable movement protein (320 aa).

Active-site residues include histidine 144, aspartate 171, and serine 199. 2 disordered regions span residues arginine 251–arginine 270 and glutamate 286–proline 320.

This sequence belongs to the tobamoviruses movement protein family.

May play a role in virus cell to cell movement by increasing the size exclusion limit of plasmodesmata and forming a complex with viral RNA to assist its movement. May also have a papain-like protease activity and cleave the genome polyprotein. This chain is Probable movement protein, found in Malus sylvestris (European crab apple).